Consider the following 291-residue polypeptide: 3-methylcatechol 2,3-dioxygenase (291 aa).

2 VOC domains span residues 5–119 (RLGY…IYYG) and 143–264 (GLGH…YGWG). The Fe cation site is built by His-146, His-210, and Glu-260.

The protein belongs to the extradiol ring-cleavage dioxygenase family. In terms of assembly, homooctamer. Fe(2+) is required as a cofactor.

The enzyme catalyses 3-methylcatechol + O2 = 2-hydroxy-6-oxo-2,4-heptadienoate + H(+). It functions in the pathway xenobiotic degradation; toluene degradation. This chain is 3-methylcatechol 2,3-dioxygenase (todE), found in Pseudomonas putida (strain ATCC 700007 / DSM 6899 / JCM 31910 / BCRC 17059 / LMG 24140 / F1).